The following is a 357-amino-acid chain: Probable dual-specificity RNA methyltransferase RlmN (357 aa).

The active-site Proton acceptor is Glu-95. In terms of domain architecture, Radical SAM core spans 105-343; the sequence is KKSSYTLCLS…VSIREERGSD (239 aa). A disulfide bridge connects residues Cys-112 and Cys-348. [4Fe-4S] cluster-binding residues include Cys-119, Cys-123, and Cys-126. Residues 174–175, Ser-206, 229–231, and Asn-305 contribute to the S-adenosyl-L-methionine site; these read GE and SLH. Cys-348 acts as the S-methylcysteine intermediate in catalysis.

This sequence belongs to the radical SAM superfamily. RlmN family. [4Fe-4S] cluster serves as cofactor.

It localises to the cytoplasm. The enzyme catalyses adenosine(2503) in 23S rRNA + 2 reduced [2Fe-2S]-[ferredoxin] + 2 S-adenosyl-L-methionine = 2-methyladenosine(2503) in 23S rRNA + 5'-deoxyadenosine + L-methionine + 2 oxidized [2Fe-2S]-[ferredoxin] + S-adenosyl-L-homocysteine. It carries out the reaction adenosine(37) in tRNA + 2 reduced [2Fe-2S]-[ferredoxin] + 2 S-adenosyl-L-methionine = 2-methyladenosine(37) in tRNA + 5'-deoxyadenosine + L-methionine + 2 oxidized [2Fe-2S]-[ferredoxin] + S-adenosyl-L-homocysteine. Specifically methylates position 2 of adenine 2503 in 23S rRNA and position 2 of adenine 37 in tRNAs. The sequence is that of Probable dual-specificity RNA methyltransferase RlmN from Syntrophomonas wolfei subsp. wolfei (strain DSM 2245B / Goettingen).